A 125-amino-acid polypeptide reads, in one-letter code: Phosphoribosyl-AMP cyclohydrolase (125 aa).

Asp74 is a Mg(2+) binding site. Cys75 is a binding site for Zn(2+). Positions 76 and 78 each coordinate Mg(2+). Cys92 and Cys99 together coordinate Zn(2+).

Belongs to the PRA-CH family. As to quaternary structure, homodimer. Mg(2+) serves as cofactor. Requires Zn(2+) as cofactor.

The protein resides in the cytoplasm. It carries out the reaction 1-(5-phospho-beta-D-ribosyl)-5'-AMP + H2O = 1-(5-phospho-beta-D-ribosyl)-5-[(5-phospho-beta-D-ribosylamino)methylideneamino]imidazole-4-carboxamide. The protein operates within amino-acid biosynthesis; L-histidine biosynthesis; L-histidine from 5-phospho-alpha-D-ribose 1-diphosphate: step 3/9. Catalyzes the hydrolysis of the adenine ring of phosphoribosyl-AMP. The protein is Phosphoribosyl-AMP cyclohydrolase of Desulfatibacillum aliphaticivorans.